The sequence spans 215 residues: Glutathione S-transferase stcT (215 aa).

One can recognise a GST N-terminal domain in the interval 2–82; sequence PFGTLYTRPF…YDSNTTLLGT (81 aa). Residues K52 and E66 each contribute to the glutathione site. K52 provides a ligand contact to substrate. In terms of domain architecture, GST C-terminal spans 83-211; it reads TGQEYASIIR…PVLAEYEMPI (129 aa).

The protein belongs to the GST superfamily. Glutathione is required as a cofactor.

It participates in mycotoxin biosynthesis; sterigmatocystin biosynthesis. Its function is as follows. Glutathione S-transferase; part of the gene cluster that mediates the biosynthesis of sterigmatocystin (ST), a polyketide-derived furanocoumarin which is part of the most toxic and carcinogenic compounds among the known mycotoxins. The first step in the biosynthesis of sterigmatocystin is the production of hexanoate by the fatty acid synthase (FAS) units stcJ and stcK. The polyketide backbone is assembled by the non-reducing polyketide synthase stcA by condensation of the starter hexanoyl-CoA and 7 malonyl-CoA extender units followed by cyclization and release of norsolorinic acid. Norsolorinic acid is the first stable intermediate in the biosynthesis of sterigmatocystin and is converted into averantin (AVN) by the ketoreductase stcE which reduces the hexanoate ketone to an alcohol. Averantin is then oxidized into 5'-hydroxyaverantin (HAVN) by the cytochrome P450 monooxygenase stcF. 5'-hydroxyaverantin is further converted to 5'-oxyaverantin (OAVN) by the 5'-hydroxyaverantin dehydrogenase stcG. The next step is the conversion of OAVN into averufin (AVF) which is catalyzed by a yet to be identified enzyme. The cytochrome P450 monooxygenase stcB and the flavin-binding monooxygenase stcW are both required for the conversion of averufin to 1-hydroxyversicolorone. The esterase stcI probably catalyzes the formation of versiconal hemiacetal acetate from 1-hydroxyversicolorone. The oxydoreductase stcN then probably catalyzes the biosynthetic step from versiconal to versicolorin B (VERB). The next step is performed by the versicolorin B desaturase stcL to produce versicolorin A (VERA). The ketoreductase stcU and the cytochrome P450 monooxygenase stcS are involved in the conversion of versicolorin A to demethylsterigmatocystin. The Baeyer-Villiger oxidas stcQ and the reductase stcR might be involved in the biosynthetic step from versicolorin A to demethylsterigmatocystin. The final step in the biosynthesis of sterigmatocystin is the methylation of demethylsterigmatocystin catalyzed by the methyltransferase stcP. This is Glutathione S-transferase stcT from Emericella nidulans (strain FGSC A4 / ATCC 38163 / CBS 112.46 / NRRL 194 / M139) (Aspergillus nidulans).